The following is a 111-amino-acid chain: Cytochrome c-550 (111 aa).

Heme c-binding residues include cysteine 13, cysteine 16, histidine 17, and methionine 90.

Binds 1 heme c group covalently per subunit.

The chain is Cytochrome c-550 from Novispirillum itersonii (Aquaspirillum itersonii).